A 224-amino-acid chain; its full sequence is Pyridoxine/pyridoxamine 5'-phosphate oxidase (224 aa).

Residues 19–22 (RGEY) and Lys81 contribute to the substrate site. Residues 76 to 81 (RSVLCK), 91 to 92 (FT), Lys98, and Gln120 contribute to the FMN site. Substrate is bound by residues Tyr138 and Arg142. Residues 155 to 156 (QS) and Trp201 contribute to the FMN site. A substrate-binding site is contributed by 207 to 209 (RMH). Position 211 (Arg211) interacts with FMN.

Belongs to the pyridoxamine 5'-phosphate oxidase family. Homodimer. Requires FMN as cofactor.

It carries out the reaction pyridoxamine 5'-phosphate + O2 + H2O = pyridoxal 5'-phosphate + H2O2 + NH4(+). It catalyses the reaction pyridoxine 5'-phosphate + O2 = pyridoxal 5'-phosphate + H2O2. It participates in cofactor metabolism; pyridoxal 5'-phosphate salvage; pyridoxal 5'-phosphate from pyridoxamine 5'-phosphate: step 1/1. It functions in the pathway cofactor metabolism; pyridoxal 5'-phosphate salvage; pyridoxal 5'-phosphate from pyridoxine 5'-phosphate: step 1/1. Catalyzes the oxidation of either pyridoxine 5'-phosphate (PNP) or pyridoxamine 5'-phosphate (PMP) into pyridoxal 5'-phosphate (PLP). The protein is Pyridoxine/pyridoxamine 5'-phosphate oxidase of Mycobacterium bovis (strain ATCC BAA-935 / AF2122/97).